The primary structure comprises 282 residues: Kallikrein-11 (282 aa).

Residues 1–50 form the signal peptide; the sequence is MQRLRWLRDWKSSGRGLTAAKEPGARSSPLQAMRILQLILLALATGLVGG. Positions 51-53 are cleaved as a propeptide — activation peptide; sequence ETR. The region spanning 53 to 280 is the Peptidase S1 domain; sequence RIIKGFECKP…YVDWIQETMK (228 aa). 6 disulfides stabilise this stretch: cysteine 60–cysteine 195, cysteine 79–cysteine 95, cysteine 167–cysteine 269, cysteine 174–cysteine 241, cysteine 206–cysteine 220, and cysteine 231–cysteine 256. Histidine 94 functions as the Charge relay system in the catalytic mechanism. Asparagine 131 carries an N-linked (GlcNAc...) asparagine glycan. The Charge relay system role is filled by aspartate 142. N-linked (GlcNAc...) asparagine glycosylation is found at asparagine 197 and asparagine 213. The Charge relay system role is filled by serine 235. Asparagine 242 carries N-linked (GlcNAc...) asparagine glycosylation.

It belongs to the peptidase S1 family. Kallikrein subfamily. In terms of processing, about 40% of KLK11 is inactivated by internal cleavage after Arg-188. This proteolytic inactivation may be effected by plasminogen. As to expression, expressed in brain, skin and prostate. Isoform 1 is expressed preferentially in brain. Isoform 2 is expressed in prostate. Present in seminal plasma at concentrations ranging from 2 to 37 microg/mL (at protein level).

Its subcellular location is the secreted. It localises to the golgi apparatus. Possible multifunctional protease. Efficiently cleaves 'bz-Phe-Arg-4-methylcoumaryl-7-amide', a kallikrein substrate, and weakly cleaves other substrates for kallikrein and trypsin. Cleaves synthetic peptides after arginine but not lysine residues. The protein is Kallikrein-11 (KLK11) of Homo sapiens (Human).